Reading from the N-terminus, the 342-residue chain is S-adenosylmethionine:tRNA ribosyltransferase-isomerase (342 aa).

This sequence belongs to the QueA family. In terms of assembly, monomer.

It localises to the cytoplasm. It carries out the reaction 7-aminomethyl-7-carbaguanosine(34) in tRNA + S-adenosyl-L-methionine = epoxyqueuosine(34) in tRNA + adenine + L-methionine + 2 H(+). Its pathway is tRNA modification; tRNA-queuosine biosynthesis. Functionally, transfers and isomerizes the ribose moiety from AdoMet to the 7-aminomethyl group of 7-deazaguanine (preQ1-tRNA) to give epoxyqueuosine (oQ-tRNA). The protein is S-adenosylmethionine:tRNA ribosyltransferase-isomerase of Moorella thermoacetica (strain ATCC 39073 / JCM 9320).